Here is a 93-residue protein sequence, read N- to C-terminus: uncharacterized protein (93 aa).

This is an uncharacterized protein from Gallid herpesvirus 2 (strain Chicken/Md5/ATCC VR-987) (GaHV-2).